A 34-amino-acid chain; its full sequence is MEPSQSINLIILGLIVVMHAGVLALRLGISLART.

A helical transmembrane segment spans residues Leu9–Ile29.

The protein belongs to the PsaM family.

The protein resides in the cellular thylakoid membrane. This chain is Photosystem I reaction center subunit XII, found in Prochlorococcus marinus subsp. pastoris (strain CCMP1986 / NIES-2087 / MED4).